The primary structure comprises 91 residues: MAKRTKKVGVVGKYGTRYGASLRKQVKKMEITQHGTYTCSFCGKDAVRRSSVGIWKCNGCRKVLAGGAWTMSTAAGATVRSTIRRLRELNN.

Residues Cys39–Cys60 form a C4-type zinc finger.

The protein belongs to the eukaryotic ribosomal protein eL43 family.

The chain is Large ribosomal subunit protein eL43 (rpl37A) from Dictyostelium discoideum (Social amoeba).